The primary structure comprises 413 residues: Multifunctional CCA protein (413 aa).

2 residues coordinate ATP: Gly-8 and Arg-11. Residues Gly-8 and Arg-11 each contribute to the CTP site. The Mg(2+) site is built by Asp-21 and Asp-23. Arg-91, Arg-143, and Arg-146 together coordinate ATP. CTP-binding residues include Arg-91, Arg-143, and Arg-146. One can recognise an HD domain in the interval 232 to 333; sequence TGVHVMMVID…VRLLERADAL (102 aa).

Belongs to the tRNA nucleotidyltransferase/poly(A) polymerase family. Bacterial CCA-adding enzyme type 1 subfamily. Monomer. Can also form homodimers and oligomers. The cofactor is Mg(2+). Ni(2+) is required as a cofactor.

It catalyses the reaction a tRNA precursor + 2 CTP + ATP = a tRNA with a 3' CCA end + 3 diphosphate. It carries out the reaction a tRNA with a 3' CCA end + 2 CTP + ATP = a tRNA with a 3' CCACCA end + 3 diphosphate. Catalyzes the addition and repair of the essential 3'-terminal CCA sequence in tRNAs without using a nucleic acid template. Adds these three nucleotides in the order of C, C, and A to the tRNA nucleotide-73, using CTP and ATP as substrates and producing inorganic pyrophosphate. tRNA 3'-terminal CCA addition is required both for tRNA processing and repair. Also involved in tRNA surveillance by mediating tandem CCA addition to generate a CCACCA at the 3' terminus of unstable tRNAs. While stable tRNAs receive only 3'-terminal CCA, unstable tRNAs are marked with CCACCA and rapidly degraded. This Burkholderia pseudomallei (strain K96243) protein is Multifunctional CCA protein.